Consider the following 219-residue polypeptide: uncharacterized protein (219 aa).

Positions 1–22 (MKKRRKICYCNTALLLMILLAG) are cleaved as a signal peptide. Cysteine 23 carries the N-palmitoyl cysteine lipid modification. Cysteine 23 carries the S-diacylglycerol cysteine lipid modification. The tract at residues 26–89 (SKDGEAQQPS…SAEEKSKEDN (64 aa)) is disordered. Polar residues predominate over residues 32 to 42 (QQPSNQASAVQ). The span at 43–61 (TDEKHTEPEESTKIRKDEA) shows a compositional bias: basic and acidic residues.

Its subcellular location is the cell membrane. This is an uncharacterized protein from Bacillus subtilis (strain 168).